The primary structure comprises 158 residues: 2-C-methyl-D-erythritol 2,4-cyclodiphosphate synthase (158 aa).

Asp-9 and His-11 together coordinate a divalent metal cation. 4-CDP-2-C-methyl-D-erythritol 2-phosphate is bound by residues 9-11 (DVH) and 35-36 (HS). His-43 provides a ligand contact to a divalent metal cation. Residues 57 to 59 (DIG), 62 to 66 (FPDTD), 133 to 136 (TTTE), Phe-140, and Arg-143 contribute to the 4-CDP-2-C-methyl-D-erythritol 2-phosphate site.

This sequence belongs to the IspF family. Homotrimer. Requires a divalent metal cation as cofactor.

It catalyses the reaction 4-CDP-2-C-methyl-D-erythritol 2-phosphate = 2-C-methyl-D-erythritol 2,4-cyclic diphosphate + CMP. It functions in the pathway isoprenoid biosynthesis; isopentenyl diphosphate biosynthesis via DXP pathway; isopentenyl diphosphate from 1-deoxy-D-xylulose 5-phosphate: step 4/6. Its function is as follows. Involved in the biosynthesis of isopentenyl diphosphate (IPP) and dimethylallyl diphosphate (DMAPP), two major building blocks of isoprenoid compounds. Catalyzes the conversion of 4-diphosphocytidyl-2-C-methyl-D-erythritol 2-phosphate (CDP-ME2P) to 2-C-methyl-D-erythritol 2,4-cyclodiphosphate (ME-CPP) with a corresponding release of cytidine 5-monophosphate (CMP). The polypeptide is 2-C-methyl-D-erythritol 2,4-cyclodiphosphate synthase (Haemophilus influenzae (strain PittEE)).